The primary structure comprises 610 residues: UvrABC system protein C (610 aa).

The 79-residue stretch at 16–94 folds into the GIY-YIG domain; that stretch reads SQPGVYRMYD…IKLYQPRYNV (79 aa). Positions 204 to 239 constitute a UVR domain; sequence DQVLTQLIARMEKASQDLAFEEAARIRDQIQAVRRV.

It belongs to the UvrC family. Interacts with UvrB in an incision complex.

It localises to the cytoplasm. The UvrABC repair system catalyzes the recognition and processing of DNA lesions. UvrC both incises the 5' and 3' sides of the lesion. The N-terminal half is responsible for the 3' incision and the C-terminal half is responsible for the 5' incision. The chain is UvrABC system protein C from Salmonella gallinarum (strain 287/91 / NCTC 13346).